The following is a 183-amino-acid chain: Translation initiation factor IF-3 (183 aa).

This sequence belongs to the IF-3 family. As to quaternary structure, monomer.

Its subcellular location is the cytoplasm. IF-3 binds to the 30S ribosomal subunit and shifts the equilibrium between 70S ribosomes and their 50S and 30S subunits in favor of the free subunits, thus enhancing the availability of 30S subunits on which protein synthesis initiation begins. This Yersinia enterocolitica serotype O:8 / biotype 1B (strain NCTC 13174 / 8081) protein is Translation initiation factor IF-3.